The primary structure comprises 758 residues: Vitamin K-dependent gamma-carboxylase (758 aa).

The interval 1–21 is disordered; the sequence is MAVSARSARTSPGSDKVQKDK. Ala2 bears the N-acetylalanine mark. The Cytoplasmic segment spans residues 2–60; it reads AVSARSARTSPGSDKVQKDKAELISGPRQDSLMGKLLGFEWTDLSSWRRLVTLLNRPTD. The chain crosses the membrane as a helical span at residues 61–81; the sequence is PASLAVFRFLFGFLMVLDIPQ. Topologically, residues 82-113 are lumenal; it reads ERGLSSLDRKYLDGLDVCRFPLLDALRPLPLD. Cys99 and Cys450 form a disulfide bridge. Residues 114-134 traverse the membrane as a helical segment; that stretch reads WMYLVYTIMFLGALGMMLGLC. Over 135 to 136 the chain is Cytoplasmic; sequence YR. Residues 137–157 traverse the membrane as a helical segment; the sequence is ISCVLFLLPYWYVFLLDKTSW. Over 158–292 the chain is Lumenal; that stretch reads NNHSYLYGLL…VSYFHCMNSQ (135 aa). The chain crosses the membrane as a helical span at residues 293-313; it reads LFSIGMFSYVMLASSPLFCSP. Over 314–361 the chain is Cytoplasmic; sequence EWPRKLVSYCPQRLQELLPLKAAPQPSVSCVYKRSRGKSGQKPGLRHQ. A helical membrane pass occupies residues 362–382; it reads LGAAFTLLYLLEQLFLPYSHF. The Lumenal portion of the chain corresponds to 383 to 758; it reads LTQGYNNWTN…SNPDPVHSEF (376 aa). The interval 732-758 is disordered; sequence GELSPSNMDSSHSNPPESNPDPVHSEF. Polar residues predominate over residues 735–747; that stretch reads SPSNMDSSHSNPP.

Belongs to the vitamin K-dependent gamma-carboxylase family. Monomer. May interact with CALU.

Its subcellular location is the endoplasmic reticulum membrane. It catalyses the reaction 4-carboxy-L-glutamyl-[protein] + 2,3-epoxyphylloquinone + H2O + H(+) = phylloquinol + L-glutamyl-[protein] + CO2 + O2. In terms of biological role, mediates the vitamin K-dependent carboxylation of glutamate residues to calcium-binding gamma-carboxyglutamate (Gla) residues with the concomitant conversion of the reduced hydroquinone form of vitamin K to vitamin K epoxide. Catalyzes gamma-carboxylation of various proteins, such as blood coagulation factors (F2, F7, F9 and F10), osteocalcin (BGLAP) or matrix Gla protein (MGP). This is Vitamin K-dependent gamma-carboxylase (GGCX) from Pongo abelii (Sumatran orangutan).